The primary structure comprises 487 residues: NADH-quinone oxidoreductase subunit N (487 aa).

Helical transmembrane passes span 12–32, 40–60, 79–99, 104–124, 129–149, 164–184, 201–221, 248–268, 281–301, 310–330, 332–352, 378–398, 411–431, and 455–475; these read VLIL…LIGV, LTVT…IVLF, YMKI…VGFS, FDIF…MLMI, MLSL…LAAI, FVLG…LYGF, ILHL…AFKI, APKI…FIPL, ILIF…IGQT, SSIG…ILGV, GILI…AFIL, AIVM…AGFF, GLVP…FYYL, and LCLC…FWFS.

Belongs to the complex I subunit 2 family. As to quaternary structure, NDH-1 is composed of 14 different subunits. Subunits NuoA, H, J, K, L, M, N constitute the membrane sector of the complex.

The protein localises to the cell inner membrane. The enzyme catalyses a quinone + NADH + 5 H(+)(in) = a quinol + NAD(+) + 4 H(+)(out). In terms of biological role, NDH-1 shuttles electrons from NADH, via FMN and iron-sulfur (Fe-S) centers, to quinones in the respiratory chain. The immediate electron acceptor for the enzyme in this species is believed to be ubiquinone. Couples the redox reaction to proton translocation (for every two electrons transferred, four hydrogen ions are translocated across the cytoplasmic membrane), and thus conserves the redox energy in a proton gradient. The protein is NADH-quinone oxidoreductase subunit N of Bartonella bacilliformis (strain ATCC 35685 / KC583 / Herrer 020/F12,63).